The sequence spans 141 residues: Large ribosomal subunit protein uL11 (141 aa).

This sequence belongs to the universal ribosomal protein uL11 family. As to quaternary structure, part of the ribosomal stalk of the 50S ribosomal subunit. Interacts with L10 and the large rRNA to form the base of the stalk. L10 forms an elongated spine to which L12 dimers bind in a sequential fashion forming a multimeric L10(L12)X complex. One or more lysine residues are methylated.

In terms of biological role, forms part of the ribosomal stalk which helps the ribosome interact with GTP-bound translation factors. In Synechococcus sp. (strain CC9605), this protein is Large ribosomal subunit protein uL11.